The sequence spans 153 residues: Deoxyuridine 5'-triphosphate nucleotidohydrolase (153 aa).

Residues 71–73 (RSG), Asn84, 88–90 (TID), and Lys98 contribute to the substrate site.

It belongs to the dUTPase family. Mg(2+) is required as a cofactor.

The enzyme catalyses dUTP + H2O = dUMP + diphosphate + H(+). Its pathway is pyrimidine metabolism; dUMP biosynthesis; dUMP from dCTP (dUTP route): step 2/2. Its function is as follows. This enzyme is involved in nucleotide metabolism: it produces dUMP, the immediate precursor of thymidine nucleotides and it decreases the intracellular concentration of dUTP so that uracil cannot be incorporated into DNA. The chain is Deoxyuridine 5'-triphosphate nucleotidohydrolase from Wolbachia sp. subsp. Drosophila simulans (strain wRi).